The following is a 43-amino-acid chain: Defensin (43 aa).

3 disulfides stabilise this stretch: cysteine 3/cysteine 34, cysteine 20/cysteine 39, and cysteine 24/cysteine 41.

Its subcellular location is the secreted. Functionally, antibacterial peptide active against Gram-positive and Gram-negative bacteria. This Palomena prasina (Green shield bug) protein is Defensin.